Reading from the N-terminus, the 271-residue chain is Eukaryotic translation initiation factor 3 subunit G (271 aa).

Disordered stretches follow at residues 1 to 29 (MPAL…SEVI) and 143 to 185 (KPTK…MRGR). The region spanning 189–267 (SAIRISNLSE…LILSVEWSKP (79 aa)) is the RRM domain.

Belongs to the eIF-3 subunit G family. Component of the eukaryotic translation initiation factor 3 (eIF-3) complex.

It is found in the cytoplasm. RNA-binding component of the eukaryotic translation initiation factor 3 (eIF-3) complex, which is involved in protein synthesis of a specialized repertoire of mRNAs and, together with other initiation factors, stimulates binding of mRNA and methionyl-tRNAi to the 40S ribosome. The eIF-3 complex specifically targets and initiates translation of a subset of mRNAs involved in cell proliferation. This subunit can bind 18S rRNA. This Anopheles gambiae (African malaria mosquito) protein is Eukaryotic translation initiation factor 3 subunit G.